Here is a 327-residue protein sequence, read N- to C-terminus: Immediate early response gene 5 protein (327 aa).

Disordered stretches follow at residues 59–166 (GPAG…GVFP) and 227–313 (GPAG…DKPV). The span at 71–84 (QPGEPAAGPPAGWG) shows a compositional bias: low complexity. Positions 253-262 (GEDDDAEEME) are enriched in acidic residues. Polar residues predominate over residues 265–278 (NVANLISIFGSSFS).

Belongs to the IER family. In terms of assembly, monomer. Homodimer. Associates with the catalytic subunit of protein phosphatase PP2A. Interacts (via N- and C-terminal regions) with PPP2R2B. Interacts with PPP2R2A, PPP2R2C and PPP2R2D. Interacts (via N-terminus) with RPS6KB1. Interacts (via central region) with HSF1; this interaction promotes PPP2CA-induced HSF1 dephosphorylation, leading to enhanced HSF1 transcriptional activity. Expressed in acute myeloid leukemia (AML) cells.

The protein resides in the nucleus. It localises to the cytoplasm. In terms of biological role, plays a role as a transcription factor. Mediates positive transcriptional regulation of several chaperone genes during the heat shock response in a HSF1-dependent manner. Mediates negative transcriptional regulation of CDC25B expression. Plays a role in the dephosphorylation of the heat shock factor HSF1 and ribosomal protein S6 kinase (S6K) by the protein phosphatase PP2A. Involved in the regulation of cell proliferation and resistance to thermal stress. Involved in the cell cycle checkpoint and survival in response to ionizing radiation. Associates with chromatin to the CDC25B promoter. The polypeptide is Immediate early response gene 5 protein (IER5) (Homo sapiens (Human)).